The primary structure comprises 489 residues: Tripartite motif-containing protein 10 (489 aa).

Residues 16–61 form an RING-type zinc finger; that stretch reads CPVCQGTLREPVTIDCGHNFCRVCLTRYLEITSPDPEEPPTCPLCK. The B box-type zinc-finger motif lies at 94 to 135; that stretch reads DEEDVCPEHGEKVYFFCEDDEMQLCVVCREAWEHRAHTVRFL. 4 residues coordinate Zn(2+): Cys-99, His-102, Cys-121, and His-127. A coiled-coil region spans residues 142 to 245; that stretch reads YREQIQKCLE…IEELEEKKER (104 aa). The region spanning 292 to 486 is the B30.2/SPRY domain; sequence REMKMFLEKL…FSLSSQEGAA (195 aa).

It belongs to the TRIM/RBCC family. In terms of assembly, interacts with IFNAR1; this interaction prevents association of IFNAR1 with TYK2.

It is found in the cytoplasm. Functionally, E3 ligase that plays an essential role in the differentiation and survival of terminal erythroid cells. May directly bind to PTEN and promote its ubiquitination, resulting in its proteasomal degradation and activation of hypertrophic signaling. In addition, plays a role in immune response regulation by repressing the phosphorylation of STAT1 and STAT2 in the interferon/JAK/STAT signaling pathway independent of its E3 ligase activity. Mechanistically, interacts with the intracellular domain of IFNAR1 and thereby inhibits the association between TYK2 and IFNAR1. This chain is Tripartite motif-containing protein 10 (TRIM10), found in Bos taurus (Bovine).